Here is a 62-residue protein sequence, read N- to C-terminus: Conotoxin TsMLCL-02 (62 aa).

A signal peptide spans 1-19 (MLCLPVFIILLLLASPAAP). Positions 20-54 (NPLERRIQSDLIRAALEDADMKTEKGILSSIMGTL) are excised as a propeptide.

The protein belongs to the conotoxin T superfamily. As to expression, expressed by the venom duct.

The protein localises to the secreted. The chain is Conotoxin TsMLCL-02 from Conus tessulatus (Tessellate cone).